A 447-amino-acid chain; its full sequence is MASSLSTKPFLSGSRRRSTTDGSGWSYFQTSDLRQLSNQSVQISVRRQTAPLKLVVQASGSSFGKVFQVTTYGESHGGGVGCVIDGCPPRFPISEADIQSDLDRRRPGQSRITTPRKETDTCKIYSGVADGFTTGSPIHISVPNTDQRGNDYSEMAKAYRPSHADATYDFKYGVRSVQGGGRSSARETIGRVAAGALAKKILKAYAGTEVLAYVSQAHKVVLPEGLVDHETLSLEQIESNIVRCPDSEYAEKMIAAIDAVRVKGDSVGGVVTCIMRNVPRGLGSPVFDKLEAELAKACMSLPATKGFEFGSGFSGTFLTGSEHNDEFYTDENGRIRTRTNRSGGIQGGISNGEIINMRIAFKPTSTIGKKQNTVTREREEIELIARGRHDPCVVPRAVPMVEAMVALVLLDQLMLQHAQGNLFSINPALQEPLSETVSSAAASLQGV.

Positions 1–24 (MASSLSTKPFLSGSRRRSTTDGSG) are disordered. Residues 1-57 (MASSLSTKPFLSGSRRRSTTDGSGWSYFQTSDLRQLSNQSVQISVRRQTAPLKLVVQ) constitute a chloroplast transit peptide.

Belongs to the chorismate synthase family. Homotetramer. FMNH2 is required as a cofactor. The N-terminus is blocked.

The protein localises to the plastid. It is found in the chloroplast. The enzyme catalyses 5-O-(1-carboxyvinyl)-3-phosphoshikimate = chorismate + phosphate. Its pathway is metabolic intermediate biosynthesis; chorismate biosynthesis; chorismate from D-erythrose 4-phosphate and phosphoenolpyruvate: step 7/7. Its function is as follows. Catalyzes the last common step of the biosynthesis of aromatic amino acids, produced via the shikimic acid pathway. In Capnoides sempervirens (Rock-harlequin), this protein is Chorismate synthase, chloroplastic.